The sequence spans 564 residues: Kelch repeat and BTB domain-containing protein 1 (564 aa).

Residues 21–88 form the BTB domain; the sequence is CDINIVINDE…IYGIPLSLTN (68 aa). Kelch repeat units follow at residues 252–297, 298–346, 347–395, 397–441, 442–492, and 494–539; these read IELI…VLDN, IIYM…ADDE, YIYC…MLNG, IYVI…VHDG, KIYI…SAHN, and LYVG…CEPI.

This sequence belongs to the poxviruses Kelch family. As to quaternary structure, interacts (via BTB domain) with host CUL3.

Its subcellular location is the host cytoplasm. Functionally, probable substrate-specific adapter of CUL3-containing E3 ubiquitin-protein ligases which mediate the ubiquitination and subsequent proteasomal degradation of host target proteins. The sequence is that of Kelch repeat and BTB domain-containing protein 1 (KBTB1) from Homo sapiens (Human).